Consider the following 271-residue polypeptide: Nus factor SuhB (271 aa).

The Mg(2+) site is built by glutamate 67, aspartate 86, and leucine 88. Glutamate 67 contacts substrate. Residues 88-91 (LDGT), arginine 187, and aspartate 216 contribute to the substrate site.

It belongs to the inositol monophosphatase superfamily. Homodimer. The rRNA transcription and antitermination complex (rrnTAC) consists of RNA polymerase (RNAP), NusA, NusB, NusE (rpsJ), NusG, SubB, ribosomal protein S4, DNA and precursor rRNA; S4 is more flexible than other subunits. Interacts with the ribosome and with RNA polymerase. The cofactor is Mg(2+).

It is found in the cytoplasm. The enzyme catalyses a myo-inositol phosphate + H2O = myo-inositol + phosphate. Functionally, part of the processive rRNA transcription and antitermination complex (rrnTAC). The complex forms an RNA-chaperone ring around the RNA exit tunnel of RNA polymerase (RNAP). It supports rapid transcription and antitermination of rRNA operons, cotranscriptional rRNA folding, and annealing of distal rRNA regions to allow correct ribosome biogenesis. This subunit may play a central role in organizing the structure. In terms of biological role, a ribosome-associated protein, deletion of which alters the expression of 494 genes, suggesting a role in global gene regulation. Involved in control of pathogenesis-related genes. Required for the activation of virulence factors associated with acute infections (type 3 secretion system, T3SS) while suppressing virulence factors associated with chronic infections (biofilm formation and type 6 secretion system, T6SS). It probably acts at a post-transcriptional level. The sequence is that of Nus factor SuhB from Pseudomonas aeruginosa (strain ATCC 15692 / DSM 22644 / CIP 104116 / JCM 14847 / LMG 12228 / 1C / PRS 101 / PAO1).